Consider the following 613-residue polypeptide: Putative adenosylhomocysteinase 3 (613 aa).

Composition is skewed to low complexity over residues 1–14 (MSVQVVSAAAAAKV) and 35–44 (AAAVGAMVPP). Residues 1-186 (MSVQVVSAAA…KQQKNSKGSS (186 aa)) form a disordered region. Position 2 is an N-acetylserine (S2). Residues 2–111 (SVQVVSAAAA…DGGEALVSPD (110 aa)) are LISN domain, inhibits interaction with ITPR1. The span at 52 to 68 (APAPAPAAERPPAPGPG) shows a compositional bias: pro residues. Residues 70–80 (GPTAALSPAAG) show a composition bias toward low complexity. The residue at position 109 (S109) is a Phosphoserine. Positions 137-146 (RPTKIGRRSL) are enriched in basic residues. Positions 147 to 166 (SRSISQSSTDSYSSAASYTD) are enriched in low complexity. Phosphoserine occurs at positions 151, 154, 157, and 160. Residues T238, D312, and E337 each contribute to the substrate site. 338–340 (SVT) serves as a coordination point for NAD(+). Residues K367 and D371 each coordinate substrate. NAD(+) contacts are provided by residues N372, 403–408 (GEVGKG), E424, N459, 480–482 (MGH), and N527.

The protein belongs to the adenosylhomocysteinase family. In terms of assembly, homotetramer. Forms heteromultimers with AHCYL1 (via the C-terminal region). Interacts with ITPR1; with lower affinity than AHCYL1 and maybe via ITPR1. Interacts with SLC4A4. Interacts with ZCCHC4. NAD(+) is required as a cofactor. Phosphorylated during neuronal differentiation at the LISN domain. In terms of tissue distribution, highly expressed in cerebrum, cerebellum and kidney. Also expressed in thymus, spleen, testis, ovary and, at lower, levels in lung and liver (at protein level). In cerebellum, expressed in interneurons.

The protein localises to the cytoplasm. Its subcellular location is the microsome. The catalysed reaction is S-adenosyl-L-homocysteine + H2O = L-homocysteine + adenosine. It functions in the pathway amino-acid biosynthesis; L-homocysteine biosynthesis; L-homocysteine from S-adenosyl-L-homocysteine: step 1/1. May regulate the electrogenic sodium/bicarbonate cotransporter SLC4A4 activity and Mg(2+)-sensitivity. On the contrary of its homolog AHCYL1, does not regulate ITPR1 sensitivity to inositol 1,4,5-trisphosphate. This chain is Putative adenosylhomocysteinase 3 (Ahcyl2), found in Mus musculus (Mouse).